We begin with the raw amino-acid sequence, 143 residues long: Large-conductance mechanosensitive channel (143 aa).

A run of 2 helical transmembrane segments spans residues 16–36 (VIDL…VTAL) and 84–104 (INTV…VKLI).

The protein belongs to the MscL family. As to quaternary structure, homopentamer.

It localises to the cell inner membrane. Its function is as follows. Channel that opens in response to stretch forces in the membrane lipid bilayer. May participate in the regulation of osmotic pressure changes within the cell. This Xanthomonas campestris pv. campestris (strain 8004) protein is Large-conductance mechanosensitive channel.